The following is a 363-amino-acid chain: DNA polymerase IV (363 aa).

The UmuC domain maps to 14–197 (IIHIDMDAFF…LPVEKFHGVG (184 aa)). Mg(2+) is bound by residues aspartate 18 and aspartate 115. Glutamate 116 is an active-site residue.

Belongs to the DNA polymerase type-Y family. As to quaternary structure, monomer. Mg(2+) is required as a cofactor.

It is found in the cytoplasm. It carries out the reaction DNA(n) + a 2'-deoxyribonucleoside 5'-triphosphate = DNA(n+1) + diphosphate. In terms of biological role, poorly processive, error-prone DNA polymerase involved in untargeted mutagenesis. Copies undamaged DNA at stalled replication forks, which arise in vivo from mismatched or misaligned primer ends. These misaligned primers can be extended by PolIV. Exhibits no 3'-5' exonuclease (proofreading) activity. May be involved in translesional synthesis, in conjunction with the beta clamp from PolIII. This chain is DNA polymerase IV, found in Lactococcus lactis subsp. lactis (strain IL1403) (Streptococcus lactis).